Reading from the N-terminus, the 809-residue chain is MGKRKLGVIASAFVAGALVCGSTLVNAEPVMTGGPVQGKALWTDYSGMSKEVQGPVSQILFTQSPRTAKGDPYQNYPHYIPEGSRIVLFDLNTKELKVLTNDFATAFDPCTYWDGKKFAFAGVHKKGGGCQIWEMNIDGSGLRQMTDLKGTCRSPIYYAAGSIEEGEGRIIWRDRYFEGDWKEHGMVEKTGMIIFSGSPEGVMDEFHNPYAYNLYRLDTQGGKIIQRITGHVLSGIEFPHLNTTIDQITYNLSSNFDPWLTPDGNILFSSVQANGSRAGGEGRVMICVDNWDGAYPRPIYGNCDGEIGGTSGRSQAKITFGDRKIVYVESPYMNWGVGQLAAVSWDAPFNKTYEKLTGKDGGLYRSPYPLPDDRMLVSYAERGDFGIYWFNFSKCAAGDKVYDDPNWNDHQPAPVYVKYKPRWINTFTAGKNFGVTVVTYQPFDQVKVEGYPHSWGTWICFDTTLSDQPVGPYPHQKAKNVSHGDIKAVRIIQGYQCVEPDSTRFRVGAGAHLLGGERSSSNSGTAFQQRGIIGYQYVESDGSTVTSQLSDVPYYMQILDDKGMSVQTALTWAYLRPYHGRICSGCHYGSYRGRAFKNIHAKALYNWWYDDRSHYDSPFAFRYLKFDNDGNYKGVKHGEDVVVPSDIYYGGPSGTTSQPVEGLTLDKQRTVDFRRDIQPILDAKCAMCHDSNNPPNLGGGLELVSVDGIAAYSRAYNSLLEPQRGKDPNIGGKYVNPSAAINSLLVWRLYEAELSANAPREKIFPIEGRLLHNKFLTQDERYAIVEWIDLGAQWDNIPGPDFYPGYLVK.

Positions 1-27 (MGKRKLGVIASAFVAGALVCGSTLVNA) are cleaved as a signal peptide. C303 is a Zn(2+) binding site. Heme contacts are provided by C583 and C586. Zn(2+) is bound at residue H587. Heme contacts are provided by Y591, C685, C688, H689, and H772. The Cytochrome c domain occupies 633–792 (KGVKHGEDVV…AIVEWIDLGA (160 aa)).

In terms of assembly, part of the hydrazine synthase complex that forms an elongated dimer of heterotrimers composed of one alpha, one beta and one gamma subunit. The cofactor is heme c.

Its subcellular location is the anammoxosome. The enzyme catalyses hydrazine + 3 Fe(III)-[cytochrome c] + H2O = nitric oxide + 3 Fe(II)-[cytochrome c] + NH4(+) + 2 H(+). Its pathway is nitrogen metabolism. In terms of biological role, component of the hydrazine synthase complex that catalyzes the condensation of nitric oxide (NO) with ammonium to form hydrazine. The alpha subunit catalyzes the second half-reaction, i.e. the condensation of hydroxylamine formed in the active site of the gamma subunit with ammonia, yielding hydrazine. Is involved in anaerobic ammonium oxidation (anammox), a biological process in which nitrite is used as the electron acceptor in the conversion of ammonium to dinitrogen gas (N2) and water; this bacterial process has a major role in the Earth's nitrogen cycle and has been estimated to synthesize up to 50% of the dinitrogen gas emitted into our atmosphere from the oceans. The chain is Hydrazine synthase subunit alpha from Kuenenia stuttgartiensis.